Consider the following 203-residue polypeptide: Histidine biosynthesis bifunctional protein HisIE (203 aa).

Positions 1–114 are phosphoribosyl-AMP cyclohydrolase; sequence MLTEQQRREL…FGDTAHQWLF (114 aa). A phosphoribosyl-ATP pyrophosphohydrolase region spans residues 115 to 203; the sequence is LYQLEQLLAE…VIENLRKRHQ (89 aa).

The protein in the N-terminal section; belongs to the PRA-CH family. It in the C-terminal section; belongs to the PRA-PH family.

Its subcellular location is the cytoplasm. It carries out the reaction 1-(5-phospho-beta-D-ribosyl)-ATP + H2O = 1-(5-phospho-beta-D-ribosyl)-5'-AMP + diphosphate + H(+). The enzyme catalyses 1-(5-phospho-beta-D-ribosyl)-5'-AMP + H2O = 1-(5-phospho-beta-D-ribosyl)-5-[(5-phospho-beta-D-ribosylamino)methylideneamino]imidazole-4-carboxamide. The protein operates within amino-acid biosynthesis; L-histidine biosynthesis; L-histidine from 5-phospho-alpha-D-ribose 1-diphosphate: step 2/9. It functions in the pathway amino-acid biosynthesis; L-histidine biosynthesis; L-histidine from 5-phospho-alpha-D-ribose 1-diphosphate: step 3/9. In Shigella sonnei (strain Ss046), this protein is Histidine biosynthesis bifunctional protein HisIE.